The primary structure comprises 296 residues: Cleavage and polyadenylation specificity factor subunit 4 (296 aa).

C3H1-type zinc fingers lie at residues 35 to 63, 64 to 91, 92 to 119, 120 to 147, and 149 to 171; these read KSIAAVCNFITRNGQECDKGSACPFRHIR, GDRTIVCKHWLRGLCKKGDQCEFLHEYD, MTKMPECYFYSRFNACHNKECPFLHIDP, QSKVKDCPWYKRGFCRHGPHCRHQHLRR, and LCMDYLAGFCPEGPSCKHMHPHF. The CCHC-type 1 zinc finger occupies 189–206; that stretch reads PTCHYCGELGHKANSCKQ. The segment at 222 to 254 is disordered; sequence HSGGHSGGYSGHSGHIEGADDMQSNHHSQPHGP. A CCHC-type 2 zinc finger spans residues 266 to 283; the sequence is ITCYKCGNKGHYANKCPK.

In terms of assembly, component of the cleavage and polyadenylation specificity factor (CPSF) complex, composed of at least Clp, Cpsf73, Cpsf100 and Cpsf160. During oogenesis, expression is detected in the germarium, in nurse cells, in the oocyte, and in the somatically derived follicular epithelial cells (at protein level). At oogenesis stage 12, nurse cells degenerate and their content is transferred into the oocyte. In larvae, expressed in all organs and disks (at protein level). In the larval salivary gland, expression is initially confined to cells at the anterior end but later expands throughout the entire gland (at protein level).

The protein resides in the nucleus. Its function is as follows. Component of the cleavage and polyadenylation specificity factor (CPSF) complex that plays a key role in pre-mRNA 3'-end formation, recognizing the AAUAAA signal sequence and interacting with poly(A) polymerase and other factors to bring about cleavage and poly(A) addition. Has endonuclease activity. Binds RNA polymers with a preference for G- and/or C-rich clusters. Binds single-stranded DNA non-specifically. The polypeptide is Cleavage and polyadenylation specificity factor subunit 4 (Clp) (Drosophila melanogaster (Fruit fly)).